Here is a 129-residue protein sequence, read N- to C-terminus: Small ribosomal subunit protein uS11 (129 aa).

Belongs to the universal ribosomal protein uS11 family. As to quaternary structure, part of the 30S ribosomal subunit. Interacts with proteins S7 and S18. Binds to IF-3.

Functionally, located on the platform of the 30S subunit, it bridges several disparate RNA helices of the 16S rRNA. Forms part of the Shine-Dalgarno cleft in the 70S ribosome. The protein is Small ribosomal subunit protein uS11 of Ectopseudomonas mendocina (strain ymp) (Pseudomonas mendocina).